The primary structure comprises 86 residues: Omega-theraphotoxin-Hhn1f 2 (86 aa).

Positions 1–21 (MKSIVFVALFGLALLAVVCSA) are cleaved as a signal peptide. Positions 22-50 (SEDAHKELLKEVVRAVVVDKTDAVQAEER) are excised as a propeptide. 3 disulfides stabilise this stretch: Cys52/Cys66, Cys59/Cys71, and Cys65/Cys78.

It belongs to the neurotoxin 10 (Hwtx-1) family. 17 (Hntx-9) subfamily. In terms of tissue distribution, expressed by the venom gland.

The protein resides in the secreted. Ion channel inhibitor. The sequence is that of Omega-theraphotoxin-Hhn1f 2 from Cyriopagopus hainanus (Chinese bird spider).